Here is a 248-residue protein sequence, read N- to C-terminus: 2,3-bisphosphoglycerate-dependent phosphoglycerate mutase (248 aa).

Residues 8-15, 21-22, arginine 60, 87-90, lysine 98, 114-115, and 183-184 each bind substrate; these read RHGESTWN, TG, ERHY, RR, and GN. Histidine 9 (tele-phosphohistidine intermediate) is an active-site residue. Residue glutamate 87 is the Proton donor/acceptor of the active site.

Belongs to the phosphoglycerate mutase family. BPG-dependent PGAM subfamily. In terms of assembly, homodimer.

The catalysed reaction is (2R)-2-phosphoglycerate = (2R)-3-phosphoglycerate. Its pathway is carbohydrate degradation; glycolysis; pyruvate from D-glyceraldehyde 3-phosphate: step 3/5. Its function is as follows. Catalyzes the interconversion of 2-phosphoglycerate and 3-phosphoglycerate. This Burkholderia cenocepacia (strain ATCC BAA-245 / DSM 16553 / LMG 16656 / NCTC 13227 / J2315 / CF5610) (Burkholderia cepacia (strain J2315)) protein is 2,3-bisphosphoglycerate-dependent phosphoglycerate mutase.